Here is a 272-residue protein sequence, read N- to C-terminus: NH(3)-dependent NAD(+) synthetase (272 aa).

ATP is bound at residue 45 to 52 (GISGGQDS). A Mg(2+)-binding site is contributed by Asp51. A deamido-NAD(+)-binding site is contributed by Arg138. Thr158 is an ATP binding site. Glu163 provides a ligand contact to Mg(2+). Deamido-NAD(+)-binding residues include Lys171 and Asp178. Residues Lys187 and Thr209 each contribute to the ATP site. Residue 258 to 259 (HK) coordinates deamido-NAD(+).

It belongs to the NAD synthetase family. As to quaternary structure, homodimer.

The catalysed reaction is deamido-NAD(+) + NH4(+) + ATP = AMP + diphosphate + NAD(+) + H(+). The protein operates within cofactor biosynthesis; NAD(+) biosynthesis; NAD(+) from deamido-NAD(+) (ammonia route): step 1/1. Catalyzes the ATP-dependent amidation of deamido-NAD to form NAD. Uses ammonia as a nitrogen source. This is NH(3)-dependent NAD(+) synthetase from Bacillus licheniformis (strain ATCC 14580 / DSM 13 / JCM 2505 / CCUG 7422 / NBRC 12200 / NCIMB 9375 / NCTC 10341 / NRRL NRS-1264 / Gibson 46).